Reading from the N-terminus, the 172-residue chain is MKRCACLSNSPTRHTTVVVPSPVISSCAAAALAISTAVGDWICISVSNTLPSLVSLMLPAPSTSIFSVPLGPKLVSRTDCKPSADVTLTFKAASLLNDSAFGFNNCNDMLLLYLYYNLLLLTASTPLTFTFSTHCTHTLLYIILSVFRSFLTRITTTNTSPSENFATKAKLP.

Residues 109-129 (MLLLYLYYNLLLLTASTPLTF) traverse the membrane as a helical segment.

The protein localises to the membrane. This is an uncharacterized protein from Saccharomyces cerevisiae (strain ATCC 204508 / S288c) (Baker's yeast).